A 292-amino-acid polypeptide reads, in one-letter code: 1D-myo-inositol 2-acetamido-2-deoxy-alpha-D-glucopyranoside deacetylase (292 aa).

Zn(2+) contacts are provided by His12, Asp15, and His147.

This sequence belongs to the MshB deacetylase family. Zn(2+) serves as cofactor.

The catalysed reaction is 1D-myo-inositol 2-acetamido-2-deoxy-alpha-D-glucopyranoside + H2O = 1D-myo-inositol 2-amino-2-deoxy-alpha-D-glucopyranoside + acetate. Catalyzes the deacetylation of 1D-myo-inositol 2-acetamido-2-deoxy-alpha-D-glucopyranoside (GlcNAc-Ins) in the mycothiol biosynthesis pathway. The sequence is that of 1D-myo-inositol 2-acetamido-2-deoxy-alpha-D-glucopyranoside deacetylase from Rhodococcus jostii (strain RHA1).